Here is a 613-residue protein sequence, read N- to C-terminus: YTH domain-containing family protein 2 (613 aa).

Disordered regions lie at residues 1-43 (MSAS…AQPR), 215-234 (SQVS…AKTA), and 244-396 (AKPQ…TVPA). The localization to mRNA processing bodies (P-bodies) stretch occupies residues 2–397 (SASSLLEQRP…GMGGITVPAE (396 aa)). Residues 16-27 (NKVQNGAVTQKD) show a composition bias toward polar residues. Composition is skewed to low complexity over residues 218-234 (STAP…AKTA), 295-307 (NGQP…PQPG), and 345-360 (PPQL…PSQP). Residues 398–613 (PHPVLEKLRM…RMQDRQGRVK (216 aa)) are interaction with m6A-containing mRNAs. The region spanning 423-557 (GRVFIIKSYS…DKARQVLKII (135 aa)) is the YTH domain. RNA is bound by residues 429–431 (KSY), Asp-435, 445–446 (WC), Asn-475, Trp-499, and Trp-504. 2 stretches are compositionally biased toward basic and acidic residues: residues 578–587 (EEEESVKKVE) and 604–613 (RMQDRQGRVK). The tract at residues 578 to 613 (EEEESVKKVEVQGSDPYSNNSSRSHYRMQDRQGRVK) is disordered.

It belongs to the YTHDF family. YTHDF2 subfamily.

It is found in the cytoplasm. The protein localises to the cytosol. The protein resides in the P-body. It localises to the stress granule. Its subcellular location is the nucleus. In terms of biological role, specifically recognizes and binds N6-methyladenosine (m6A)-containing RNAs, and regulates their stability. M6A is a modification present at internal sites of mRNAs and some non-coding RNAs and plays a role in mRNA stability and processing. Acts as a regulator of mRNA stability by promoting degradation of m6A-containing mRNAs. The YTHDF paralogs (ythdf1, ythdf2 and ythdf3) share m6A-containing mRNAs targets and act redundantly to mediate mRNA degradation and cellular differentiation. Plays a key role in maternal-to-zygotic transition during early embryonic development, the process during which maternally inherited mRNAs are degraded: acts by binding m6A-containing maternal mRNAs and promoting their degradation. More than one-third of maternal mRNAs can be modified by m6A. Binding to m6A-containing mRNAs results in mRNA degradation. Also involved in hematopoietic stem cells specification by binding to m6A-containing mRNAs, such as notch1a, and promote their degradation. The decreased Notch signaling following notch1a degradation promotes endothelial to hematopoietic transition. Promotes formation of phase-separated membraneless compartments, such as P-bodies or stress granules, by undergoing liquid-liquid phase separation upon binding to mRNAs containing multiple m6A-modified residues: polymethylated mRNAs act as a multivalent scaffold for the binding of YTHDF proteins, juxtaposing their disordered regions and thereby leading to phase separation. The resulting mRNA-YTHDF complexes then partition into different endogenous phase-separated membraneless compartments, such as P-bodies, stress granules or neuronal RNA granules. The sequence is that of YTH domain-containing family protein 2 from Danio rerio (Zebrafish).